Consider the following 92-residue polypeptide: Signal recognition particle 19 kDa protein (92 aa).

It belongs to the SRP19 family. Part of the signal recognition particle protein translocation system, which is composed of SRP and FtsY. Archaeal SRP consists of a 7S RNA molecule of 300 nucleotides and two protein subunits: SRP54 and SRP19.

The protein resides in the cytoplasm. Functionally, involved in targeting and insertion of nascent membrane proteins into the cytoplasmic membrane. Binds directly to 7S RNA and mediates binding of the 54 kDa subunit of the SRP. In Halorubrum lacusprofundi (strain ATCC 49239 / DSM 5036 / JCM 8891 / ACAM 34), this protein is Signal recognition particle 19 kDa protein.